The chain runs to 214 residues: EEF1A lysine methyltransferase 1 (214 aa).

The residue at position 2 (Ser2) is an N-acetylserine. Ser2 is modified (phosphoserine).

The protein belongs to the class I-like SAM-binding methyltransferase superfamily. EFM5 family.

Its subcellular location is the cytoplasm. It catalyses the reaction L-lysyl-[protein] + 3 S-adenosyl-L-methionine = N(6),N(6),N(6)-trimethyl-L-lysyl-[protein] + 3 S-adenosyl-L-homocysteine + 3 H(+). Protein-lysine methyltransferase that selectively catalyzes the trimethylation of EEF1A at 'Lys-79'. The protein is EEF1A lysine methyltransferase 1 of Mus musculus (Mouse).